Here is a 454-residue protein sequence, read N- to C-terminus: Probable mitochondrial saccharopine dehydrogenase-like oxidoreductase At5g39410 (454 aa).

Methionine 1 bears the N-acetylmethionine mark. Positions 215-234 (RRSRPRRPRPTICGPPAKGP) are disordered.

It belongs to the saccharopine dehydrogenase family.

It localises to the mitochondrion membrane. This Arabidopsis thaliana (Mouse-ear cress) protein is Probable mitochondrial saccharopine dehydrogenase-like oxidoreductase At5g39410.